A 261-amino-acid polypeptide reads, in one-letter code: Ribosomal RNA small subunit methyltransferase J (261 aa).

Residues 109 to 110 (RD), 125 to 126 (ER), and D179 contribute to the S-adenosyl-L-methionine site.

It belongs to the methyltransferase superfamily. RsmJ family.

The protein localises to the cytoplasm. It catalyses the reaction guanosine(1516) in 16S rRNA + S-adenosyl-L-methionine = N(2)-methylguanosine(1516) in 16S rRNA + S-adenosyl-L-homocysteine + H(+). Its function is as follows. Specifically methylates the guanosine in position 1516 of 16S rRNA. This is Ribosomal RNA small subunit methyltransferase J from Pseudomonas aeruginosa (strain LESB58).